The following is a 131-amino-acid chain: MTAEIMEKAEVLAAAIAKSVELQNLRSTEEAMMADEQAQQIIADFQNEQQRVYELQAQGQELTDEVQQAIDAMEAKVEGYPPIAAYLQAQEQFTKMLDTINGVLAQAIANDPNGGGCSCDTGCSGCGGSCS.

The protein belongs to the UPF0342 family.

This Desulfitobacterium hafniense (strain Y51) protein is UPF0342 protein DSY1594.